Consider the following 305-residue polypeptide: MSKKLTFQEIILTLQQFWNDQGCMLMQAYDNEKGAGTMSPYTFLRAIGPEPWNAAYVEPSRRPADGRYGENPNRLYQHHQFQVVMKPSPSNIQELYLESLEKLGINPLEHDIRFVEDNWENPSTGSAGLGWEVWLDGMEITQFTYFQQVGGLATGPVTAEVTYGLERLASYIQEVDSVYDIEWADGVKYGEIFIQPEYEHSKYSFEISDQEMLLENFDKFEKEAGRALEEGLVHPAYDYVLKCSHTFNLLDARGAVSVTERAGYIARIRNLARVVAKTFVAERKRLGYPLLDEETRVKLLAEDAE.

This sequence belongs to the class-II aminoacyl-tRNA synthetase family. In terms of assembly, tetramer of two alpha and two beta subunits.

Its subcellular location is the cytoplasm. The enzyme catalyses tRNA(Gly) + glycine + ATP = glycyl-tRNA(Gly) + AMP + diphosphate. The sequence is that of Glycine--tRNA ligase alpha subunit from Streptococcus pneumoniae (strain 70585).